Reading from the N-terminus, the 213-residue chain is Methylthioribulose-1-phosphate dehydratase (213 aa).

The Zn(2+) site is built by H104 and H106.

It belongs to the aldolase class II family. MtnB subfamily. Zn(2+) serves as cofactor.

The catalysed reaction is 5-(methylsulfanyl)-D-ribulose 1-phosphate = 5-methylsulfanyl-2,3-dioxopentyl phosphate + H2O. It participates in amino-acid biosynthesis; L-methionine biosynthesis via salvage pathway; L-methionine from S-methyl-5-thio-alpha-D-ribose 1-phosphate: step 2/6. Catalyzes the dehydration of methylthioribulose-1-phosphate (MTRu-1-P) into 2,3-diketo-5-methylthiopentyl-1-phosphate (DK-MTP-1-P). This chain is Methylthioribulose-1-phosphate dehydratase, found in Stenotrophomonas maltophilia (strain R551-3).